We begin with the raw amino-acid sequence, 318 residues long: Transcriptional regulator NovG (318 aa).

Over residues 146-156 the composition is skewed to polar residues; sequence VASLRSSSTAG. The disordered stretch occupies residues 146-176; that stretch reads VASLRSSSTAGTVGRRTGQDGRSRPNDGTDG. Positions 162–176 are enriched in basic and acidic residues; the sequence is TGQDGRSRPNDGTDG.

Belongs to the ParB family.

Functionally, transcription regulator that specifically activates expression of genes involved in the novobiocin biosynthesis pathway. Binds 5'-GTTCRACTG(N)(11)CRGTYGAAC-3' DNA sequence. In Streptomyces niveus (Streptomyces spheroides), this protein is Transcriptional regulator NovG (novG).